Consider the following 380-residue polypeptide: Genome polyprotein (380 aa).

2 disordered regions span residues 54 to 154 and 349 to 380; these read GTVD…TGKI and GNVG…QQHH. Residues 67-84 are compositionally biased toward low complexity; the sequence is QGTTPPATGSGAKPATSG. 2 stretches are compositionally biased toward gly residues: residues 85-99 and 106-123; these read AGSG…GVTG and SGTG…GSGS. Over residues 129–140 the composition is skewed to low complexity; that stretch reads NTGSAGTNATGG.

It belongs to the potyviridae genome polyprotein family. Genome polyprotein of potyviruses undergoes post-translational proteolytic processing by the main proteinase NIa-pro resulting in the production of at least ten individual proteins. The P1 proteinase and the HC-pro cleave only their respective C-termini autocatalytically. 6K1 is essential for proper proteolytic separation of P3 from CI.

It is found in the virion. The enzyme catalyses RNA(n) + a ribonucleoside 5'-triphosphate = RNA(n+1) + diphosphate. Its function is as follows. An RNA-dependent RNA polymerase that plays an essential role in the virus replication. Involved in aphid transmission, cell-to-cell and systemis movement, encapsidation of the viral RNA and in the regulation of viral RNA amplification. This is Genome polyprotein from Sorghum halepense (Johnson grass).